A 641-amino-acid polypeptide reads, in one-letter code: MDKTLSREEAKQLMQLLCLDMSCWGNLPLMRRQYLVKCKEYHPDKGGNEESMKLLNSLYLKLQDSVSSVHDLNEEEDNIWQSSQIPTYGTPDWDEWWSQFNTYWEEELRCNESMPSSPKRSAPEEEPSCSQATPPKKKHAFDASLEFPKELLEFVSHAVFSNKCITCFVVHTTREKGEVLYKKLLQKYQCSFISKHAFYNTVLIFFLTPHKHRVSAINNFCKGHCTVSFLFCKGVNNPYGLYSRMCRQPFNLCEENIPGGLKENEFNPEDLFGEPKEPSLSWNQIANFALEFDIDDVYYLLGSYIRFATKPEECEKCSKNDDATHKRVHVQNHENAVLLQESKSQKNACTQAIDRVIAERRYNCVTLTRKKLLTKRFKKLFNEMDKIVVGERKILLYMASIAWYTGLNKKIDELVVRFLKLIVDNKPKHRYWLFKGPINSGKTTLATALLNLCGGKALNINIPSEKLPFELGVALDQYMVVFEDVKGQIGIEKQLPSGNGVNNLDNLRDYLDGCVEVNLEKKHVNKRSQIFPPGIVTMNEYCIPETVAVRFEKTVMFTIKRNLRESLEKTPQLLSQRILHSGIAMLLLLIWYRPVSDFDEEIQSNVVYWKEVLDNYIGLTEFATMQMNVTNGKNILEKWFE.

Methionine 1 bears the N-acetylmethionine; by host mark. The J domain maps to 12–80 (QLMQLLCLDM…DLNEEEDNIW (69 aa)). Positions 108-112 (LRCNE) match the LXCXE motif motif. Positions 114-136 (MPSSPKRSAPEEEPSCSQATPPK) are disordered. Serine 117 bears the Phosphoserine; by host mark. Threonine 133 is subject to Phosphothreonine; by host. Positions 134–141 (PPKKKHAF) match the Nuclear localization signal motif. A DNA-binding region (T-ag OBD) is located at residues 148-263 (PKELLEFVSH…EENIPGGLKE (116 aa)). Residues 277-369 (EPSLSWNQIA…RRYNCVTLTR (93 aa)) form a T-ag D1-type zinc finger. 4 residues coordinate Zn(2+): cysteine 314, cysteine 317, histidine 325, and histidine 329. The SF3 helicase domain occupies 410-572 (KIDELVVRFL…LRESLEKTPQ (163 aa)). 436 to 443 (GPINSGKT) provides a ligand contact to ATP.

In terms of assembly, forms homohexamers in the presence of ATP. Interacts with host HDAC1. Interacts (via LXCXE domain) with host RB1; the interaction induces the aberrant dissociation of RB1-E2F1 complex thereby disrupting RB1's activity. Interacts (via LXCXE domain) with host pRB-related proteins RBL1 and RBL2. Interacts (via C-terminus) with host TOP1 and POLA1 allowing DNA replication. Interacts with host TP53, inhibiting TP53 binding to DNA. Interacts with host preinitiation complex components TBP, TFIIA and TFIID to regulate transcription initiation. Requires Mg(2+) as cofactor. In terms of processing, phosphorylated on both serine and threonine residues. Small t antigen inhibits the dephosphorylation by the AC form of PP2A. O-Glycosylated near the C-terminal region. Post-translationally, acetylated by CBP in a TP53-dependent manner.

The protein localises to the host nucleus. The enzyme catalyses Couples ATP hydrolysis with the unwinding of duplex DNA by translocating in the 3'-5' direction.. It carries out the reaction ATP + H2O = ADP + phosphate + H(+). Its function is as follows. Isoform large T antigen is a key early protein essential for both driving viral replication and inducing cellular transformation. Plays a role in viral genome replication by driving entry of quiescent cells into the cell cycle and by autoregulating the synthesis of viral early mRNA. Displays highly oncogenic activities by corrupting the host cellular checkpoint mechanisms that guard cell division and the transcription, replication, and repair of DNA. Participates in the modulation of cellular gene expression preceeding viral DNA replication. This step involves binding to host key cell cycle regulators retinoblastoma protein RB1/pRb and TP53. Induces the disassembly of host E2F1 transcription factors from RB1, thus promoting transcriptional activation of E2F1-regulated S-phase genes. Inhibits host TP53 binding to DNA, abrogating the ability of TP53 to stimulate gene expression. Plays the role of a TFIID-associated factor (TAF) in transcription initiation for all three RNA polymerases, by stabilizing the TBP-TFIIA complex on promoters. Initiates viral DNA replication and unwinding via interactions with the viral origin of replication. Binds two adjacent sites in the SV40 origin. The replication fork movement is facilitated by Large T antigen helicase activity. Has processive 3'-5' DNA helicase activity which requires a short 3' single-stranded region and ATP. Activates the transcription of viral late mRNA, through host TBP and TFIIA stabilization. Interferes with histone deacetylation mediated by HDAC1, leading to activation of transcription. In Homo sapiens (Human), this protein is Large T antigen.